Consider the following 642-residue polypeptide: Chaperone protein HtpG (642 aa).

Positions 1 to 349 are a; substrate-binding; it reads MSAATETEVR…SADLPLNVSR (349 aa). The disordered stretch occupies residues 216 to 238; the sequence is ELPPAPPAKEGEEPEPPKTPEWE. The segment covering 224 to 236 has biased composition (basic and acidic residues); that stretch reads KEGEEPEPPKTPE. Residues 350–570 are b; it reads EILQQNRQVE…AHDMSATLER (221 aa). Positions 571–642 are c; sequence LLKEAGQEVP…VKRLNKLLMG (72 aa).

Belongs to the heat shock protein 90 family. In terms of assembly, homodimer.

It is found in the cytoplasm. In terms of biological role, molecular chaperone. Has ATPase activity. This is Chaperone protein HtpG from Magnetococcus marinus (strain ATCC BAA-1437 / JCM 17883 / MC-1).